The following is a 454-amino-acid chain: Tubulin beta-3 chain (454 aa).

GTP contacts are provided by Q11, E75, S144, G148, T149, G150, N210, and N232. E75 lines the Mg(2+) pocket. Residues 435–454 (TADDEFDPEVNQEEVEGDCI) are disordered.

Belongs to the tubulin family. As to quaternary structure, dimer of alpha and beta chains. A typical microtubule is a hollow water-filled tube with an outer diameter of 25 nm and an inner diameter of 15 nM. Alpha-beta heterodimers associate head-to-tail to form protofilaments running lengthwise along the microtubule wall with the beta-tubulin subunit facing the microtubule plus end conferring a structural polarity. Microtubules usually have 13 protofilaments but different protofilament numbers can be found in some organisms and specialized cells. The cofactor is Mg(2+).

Its subcellular location is the cytoplasm. The protein resides in the cytoskeleton. In terms of biological role, tubulin is the major constituent of microtubules, a cylinder consisting of laterally associated linear protofilaments composed of alpha- and beta-tubulin heterodimers. Microtubules grow by the addition of GTP-tubulin dimers to the microtubule end, where a stabilizing cap forms. Below the cap, tubulin dimers are in GDP-bound state, owing to GTPase activity of alpha-tubulin. The chain is Tubulin beta-3 chain (betaTub60D) from Drosophila melanogaster (Fruit fly).